We begin with the raw amino-acid sequence, 497 residues long: Probable cytosol aminopeptidase (497 aa).

Mn(2+)-binding residues include Lys263 and Asp268. Residue Lys275 is part of the active site. Mn(2+) is bound by residues Asp286, Asp345, and Glu347. Arg349 is a catalytic residue.

The protein belongs to the peptidase M17 family. Mn(2+) serves as cofactor.

It localises to the cytoplasm. It catalyses the reaction Release of an N-terminal amino acid, Xaa-|-Yaa-, in which Xaa is preferably Leu, but may be other amino acids including Pro although not Arg or Lys, and Yaa may be Pro. Amino acid amides and methyl esters are also readily hydrolyzed, but rates on arylamides are exceedingly low.. The enzyme catalyses Release of an N-terminal amino acid, preferentially leucine, but not glutamic or aspartic acids.. In terms of biological role, presumably involved in the processing and regular turnover of intracellular proteins. Catalyzes the removal of unsubstituted N-terminal amino acids from various peptides. The protein is Probable cytosol aminopeptidase of Rhizobium meliloti (strain 1021) (Ensifer meliloti).